Reading from the N-terminus, the 123-residue chain is Small ribosomal subunit protein uS12 (123 aa).

A disordered region spans residues 1–32 (MPTIQQLVRKGRTDKISKNKTPALKGSPQRRG). D89 is subject to 3-methylthioaspartic acid. The interval 103–123 (DTQGVKGRKQARSRYGAKKEK) is disordered. A compositionally biased stretch (basic residues) spans 108–123 (KGRKQARSRYGAKKEK).

The protein belongs to the universal ribosomal protein uS12 family. Part of the 30S ribosomal subunit. Contacts proteins S8 and S17. May interact with IF1 in the 30S initiation complex.

With S4 and S5 plays an important role in translational accuracy. Functionally, interacts with and stabilizes bases of the 16S rRNA that are involved in tRNA selection in the A site and with the mRNA backbone. Located at the interface of the 30S and 50S subunits, it traverses the body of the 30S subunit contacting proteins on the other side and probably holding the rRNA structure together. The combined cluster of proteins S8, S12 and S17 appears to hold together the shoulder and platform of the 30S subunit. The protein is Small ribosomal subunit protein uS12 of Cutibacterium acnes (strain DSM 16379 / KPA171202) (Propionibacterium acnes).